Reading from the N-terminus, the 106-residue chain is Putative toxin Rv3098A/RVBD_3098A (106 aa).

Belongs to the PemK/MazF family. As to quaternary structure, forms a complex with cognate antitoxin Rv3098B/RVBD_3098B.

Its function is as follows. Putative toxic component of a possible type II toxin-antitoxin (TA) system. Its toxic effect may be neutralized by cognate antitoxin Rv3098B/RVBD_3098B. This chain is Putative toxin Rv3098A/RVBD_3098A, found in Mycobacterium tuberculosis (strain ATCC 25618 / H37Rv).